The following is an 805-amino-acid chain: Transcription factor SFL1 (805 aa).

A compositionally biased stretch (low complexity) spans 1 to 24 (MSHLVSSSLGTTTTATPTSRSPHT). The disordered stretch occupies residues 1–110 (MSHLVSSSLG…NNNVSNNNST (110 aa)). The span at 25 to 69 (NHSTPYNQNSITSNRSSPVPKNSVNSRIIPQTMNPPIDMKSNNIL) shows a compositional bias: polar residues. Residues 71–85 (PEKDTDTSRGDHSES) are compositionally biased toward basic and acidic residues. Over residues 86–110 (KASSISSASGTTTTNNNNVSNNNST) the composition is skewed to low complexity. Residues 117–226 (FIHKLYDMLH…LKNIKRRSSK (110 aa)) mediate DNA binding. 5 disordered regions span residues 273–336 (MQSP…NQSP), 438–483 (QSNF…VAPQ), 513–675 (REDS…PAPQ), 691–746 (HQKS…SENH), and 759–805 (VSEL…RKLE). Low complexity predominate over residues 295–310 (QQQQQQQQQQQQQQQQ). Composition is skewed to polar residues over residues 454-480 (HGNSVSSNYHLESTNVSRNPSTTNLNV) and 533-556 (PSRNSSRILIEESTPTHPPTNFNP). The segment covering 557–566 (QQSQSQSQVQ) has biased composition (low complexity). 3 stretches are compositionally biased toward polar residues: residues 581 to 597 (ESTYSPLSHSSNKSQIL), 604 to 614 (VNHSPLVQQQQ), and 622 to 635 (NDSSVAPPSQSSLP). The segment covering 637 to 659 (TRPLSRQQQQQQQTLHHPSTTSS) has biased composition (low complexity). Residues 716–738 (PISSTAPTTMITSTSKPTSTSGA) are compositionally biased toward polar residues.

The protein belongs to the HSF family.

It localises to the nucleus. In terms of biological role, transcription factor that plays a role of repressor of filamentous growth and flocculation. Antagonizes functions of SFL2 and FLO8. Plays a role in the hyphal repression induced by secreted factors like dodecanol by competitors such as Pseudomonas aeruginosa and Burkholderia cenocepacia. The protein is Transcription factor SFL1 (SFL1) of Candida albicans (strain SC5314 / ATCC MYA-2876) (Yeast).